The sequence spans 393 residues: 4-hydroxyphenylpyruvate dioxygenase (393 aa).

VOC domains lie at 17–148 (AFDH…LLER) and 179–339 (FLDH…IFSK). Residues His182, His267, and Glu350 each coordinate Fe cation.

It belongs to the 4HPPD family. Fe cation serves as cofactor. As to expression, expressed in the hypodermis and intestine.

The catalysed reaction is 3-(4-hydroxyphenyl)pyruvate + O2 = homogentisate + CO2. It functions in the pathway amino-acid degradation; L-phenylalanine degradation; acetoacetate and fumarate from L-phenylalanine: step 3/6. Key enzyme in the degradation of tyrosine. The chain is 4-hydroxyphenylpyruvate dioxygenase from Caenorhabditis elegans.